The following is a 358-amino-acid chain: CRS2-associated factor 2, mitochondrial (358 aa).

The transit peptide at 1–28 (MLSIRRSLTLAKEPKDLFLFLCNLRARC) directs the protein to the mitochondrion. A disordered region spans residues 35–64 (DPPFSPLSKPTKPPKEKKKQKTKKQDQSSE). 2 CRM domains span residues 141-239 (ETLT…SRPI) and 261-357 (DGLE…ELVT).

As to quaternary structure, part of large ribonucleo-protein complexes that include group IIB introns.

Its subcellular location is the mitochondrion. May be involved in the splicing of group IIB introns in mitochondria. The polypeptide is CRS2-associated factor 2, mitochondrial (Arabidopsis thaliana (Mouse-ear cress)).